A 260-amino-acid polypeptide reads, in one-letter code: 3-methyl-2-oxobutanoate hydroxymethyltransferase (260 aa).

Residues Asp42 and Asp81 each coordinate Mg(2+). Residues 42-43, Asp81, and Lys109 contribute to the 3-methyl-2-oxobutanoate site; that span reads DS. Glu111 is a binding site for Mg(2+). The Proton acceptor role is filled by Glu178.

Belongs to the PanB family. Homodecamer; pentamer of dimers. It depends on Mg(2+) as a cofactor.

The protein resides in the cytoplasm. The catalysed reaction is 3-methyl-2-oxobutanoate + (6R)-5,10-methylene-5,6,7,8-tetrahydrofolate + H2O = 2-dehydropantoate + (6S)-5,6,7,8-tetrahydrofolate. It participates in cofactor biosynthesis; (R)-pantothenate biosynthesis; (R)-pantoate from 3-methyl-2-oxobutanoate: step 1/2. Catalyzes the reversible reaction in which hydroxymethyl group from 5,10-methylenetetrahydrofolate is transferred onto alpha-ketoisovalerate to form ketopantoate. This is 3-methyl-2-oxobutanoate hydroxymethyltransferase from Ruthia magnifica subsp. Calyptogena magnifica.